A 155-amino-acid chain; its full sequence is Xanthine-guanine phosphoribosyltransferase 2 (155 aa).

Residues 37–38 (RG) and 91–99 (DDLVDTGNT) contribute to the 5-phospho-alpha-D-ribose 1-diphosphate site. Asp92 contacts Mg(2+). Guanine-binding residues include Asp95 and Ile138. Asp95 and Ile138 together coordinate xanthine. GMP-binding positions include 95–99 (DTGNT) and 137–138 (WI).

The protein belongs to the purine/pyrimidine phosphoribosyltransferase family. XGPT subfamily. Homotetramer. It depends on Mg(2+) as a cofactor.

It localises to the cell inner membrane. It catalyses the reaction GMP + diphosphate = guanine + 5-phospho-alpha-D-ribose 1-diphosphate. The enzyme catalyses XMP + diphosphate = xanthine + 5-phospho-alpha-D-ribose 1-diphosphate. It carries out the reaction IMP + diphosphate = hypoxanthine + 5-phospho-alpha-D-ribose 1-diphosphate. It functions in the pathway purine metabolism; GMP biosynthesis via salvage pathway; GMP from guanine: step 1/1. The protein operates within purine metabolism; XMP biosynthesis via salvage pathway; XMP from xanthine: step 1/1. Its function is as follows. Purine salvage pathway enzyme that catalyzes the transfer of the ribosyl-5-phosphate group from 5-phospho-alpha-D-ribose 1-diphosphate (PRPP) to the N9 position of the 6-oxopurines guanine and xanthine to form the corresponding ribonucleotides GMP (guanosine 5'-monophosphate) and XMP (xanthosine 5'-monophosphate), with the release of PPi. To a lesser extent, also acts on hypoxanthine. The sequence is that of Xanthine-guanine phosphoribosyltransferase 2 from Haemophilus influenzae (strain 86-028NP).